Reading from the N-terminus, the 147-residue chain is Protein PBDC1 homolog (147 aa).

Belongs to the PBDC1 family.

It localises to the cytoplasm. Its subcellular location is the nucleus. This Schizosaccharomyces pombe (strain 972 / ATCC 24843) (Fission yeast) protein is Protein PBDC1 homolog.